A 433-amino-acid polypeptide reads, in one-letter code: Trigger factor (433 aa).

Positions 163 to 248 constitute a PPIase FKBP-type domain; sequence GDVVVLDFAA…VHAVKERRLP (86 aa).

The protein belongs to the FKBP-type PPIase family. Tig subfamily.

The protein resides in the cytoplasm. It carries out the reaction [protein]-peptidylproline (omega=180) = [protein]-peptidylproline (omega=0). Its function is as follows. Involved in protein export. Acts as a chaperone by maintaining the newly synthesized protein in an open conformation. Functions as a peptidyl-prolyl cis-trans isomerase. This is Trigger factor from Nitratidesulfovibrio vulgaris (strain ATCC 29579 / DSM 644 / CCUG 34227 / NCIMB 8303 / VKM B-1760 / Hildenborough) (Desulfovibrio vulgaris).